Consider the following 105-residue polypeptide: Met repressor (105 aa).

It belongs to the MetJ family. As to quaternary structure, homodimer.

The protein localises to the cytoplasm. Its function is as follows. This regulatory protein, when combined with SAM (S-adenosylmethionine) represses the expression of the methionine regulon and of enzymes involved in SAM synthesis. This chain is Met repressor, found in Hamiltonella defensa subsp. Acyrthosiphon pisum (strain 5AT).